The chain runs to 144 residues: Dynein light chain Tctex-type protein 2B (144 aa).

This sequence belongs to the dynein light chain Tctex-type family. Light chain of the cytoplasmic dynein complex 2, a multisubunit complex composed at least of eleven different proteins. The cytoplasmic dynein 2 complex consists of two catalytic heavy chains (HCs) and a number of non-catalytic subunits presented by intermediate chains (ICs), light intermediate chains (LICs) and light chains (LCs). Among them, a heavy chain (DYNC2H1), two intermediate chains (DYNC2I2 and DYNC2I1), a light intermediate chain (DYNC2LI1), and a light chain (DYNLT2B) are unique to the dynein-2 complex, but a subset of the light chains are also shared by dynein-1 and dynein-2 complexes. The dimer DYNLT2B-DYNLT1/DYNLT3 interacts with DYNC2I1; this interaction is crucial for retrograde trafficking of ciliary proteins.

It localises to the dynein axonemal particle. Acts as one of several non-catalytic accessory components of the cytoplasmic dynein 2 complex (dynein-2 complex), a motor protein complex that drives the movement of cargos along microtubules within cilia and flagella in concert with the intraflagellar transport (IFT) system. Required for proper retrograde ciliary transport. The chain is Dynein light chain Tctex-type protein 2B (Dynlt2b) from Mus musculus (Mouse).